Consider the following 506-residue polypeptide: Aluminum-activated malate transporter 7 (506 aa).

Transmembrane regions (helical) follow at residues 28-48 (VGLV…YDSF), 52-72 (AMWA…ATLG), 78-98 (VAAT…ASMS), 104-124 (PILL…VRFF), 130-150 (RYDY…VSGF), and 166-186 (VIIG…VWAG). The tract at residues 461 to 485 (DDGNNDDTSKNDNGSKEVSIHEKHE) is disordered. Positions 467-485 (DTSKNDNGSKEVSIHEKHE) are enriched in basic and acidic residues.

Belongs to the aromatic acid exporter (TC 2.A.85) family.

The protein localises to the membrane. In terms of biological role, malate transporter. The protein is Aluminum-activated malate transporter 7 (ALMT7) of Arabidopsis thaliana (Mouse-ear cress).